The sequence spans 47 residues: Large ribosomal subunit protein eL40 (47 aa).

This sequence belongs to the eukaryotic ribosomal protein eL40 family.

The chain is Large ribosomal subunit protein eL40 from Methanococcus maripaludis (strain C5 / ATCC BAA-1333).